Consider the following 419-residue polypeptide: MAGSGCAWGAEPPRFLEAFGRLWQVQSRLGSGSSASVYRVRCCGTPGSPPGALKQFLPPGTTGAAASAAEYGFRKERAALEQLQGHRNIVTLYGVFTIHFSPNVPSRCLLLELLDVSVSELLVYSSHQGCSMWMIQHCARDVLEALAFLHHEGYVHADLKPRNILWSAENECFKLIDFGLSFKEGNQDVKYIQTDGYRAPEAELQNCLAQAGLQSDTECTSAVDLWSLGIILLEMFSGMKLKHTVRSQEWKANSSAIIDHIFASKAVVNAAIPAYHLRDLIKSMLHDDPSRRIPAEMALCSPFFSIPFAPHIEDLVMLPTPVLRLLNVLDDDYLENEDEYEDVVEDVKEECQKYGPVVSLLVPKENPGRGQVFVEYANAGDSKAAQKLLTGRMFDGKFVVATFYPLSAYKRGYLYQTLL.

Positions 23 to 304 (WQVQSRLGSG…AEMALCSPFF (282 aa)) constitute a Protein kinase domain. ATP-binding positions include 29–37 (LGSGSSASV) and K54. Active-site proton acceptor residues include D141 and D158. In terms of domain architecture, RRM spans 324-406 (RLLNVLDDDY…KFVVATFYPL (83 aa)).

It belongs to the protein kinase superfamily. Ser/Thr protein kinase family. Interacts with stathmin and CDKN1B/p27Kip1 Interacts with PAM. In terms of tissue distribution, in the embryo, preferentially expressed in the developing nervous system.

The protein resides in the cytoplasm. The protein localises to the nucleus. It carries out the reaction L-seryl-[protein] + ATP = O-phospho-L-seryl-[protein] + ADP + H(+). It catalyses the reaction L-threonyl-[protein] + ATP = O-phospho-L-threonyl-[protein] + ADP + H(+). In terms of biological role, upon serum stimulation, phosphorylates CDKN1B/p27Kip1, thus controlling CDKN1B subcellular location and cell cycle progression in G1 phase. May be involved in trafficking and/or processing of RNA. The polypeptide is Serine/threonine-protein kinase Kist (Uhmk1) (Rattus norvegicus (Rat)).